The following is a 249-amino-acid chain: Hydroxyacylglutathione hydrolase (249 aa).

Zn(2+)-binding residues include H53, H55, D57, H58, H110, D127, and H165.

The protein belongs to the metallo-beta-lactamase superfamily. Glyoxalase II family. In terms of assembly, monomer. The cofactor is Zn(2+).

The enzyme catalyses an S-(2-hydroxyacyl)glutathione + H2O = a 2-hydroxy carboxylate + glutathione + H(+). Its pathway is secondary metabolite metabolism; methylglyoxal degradation; (R)-lactate from methylglyoxal: step 2/2. Its function is as follows. Thiolesterase that catalyzes the hydrolysis of S-D-lactoyl-glutathione to form glutathione and D-lactic acid. This is Hydroxyacylglutathione hydrolase from Hamiltonella defensa subsp. Acyrthosiphon pisum (strain 5AT).